Consider the following 201-residue polypeptide: ATP-dependent Clp protease proteolytic subunit (201 aa).

Serine 98 functions as the Nucleophile in the catalytic mechanism. The active site involves histidine 123.

Belongs to the peptidase S14 family. As to quaternary structure, fourteen ClpP subunits assemble into 2 heptameric rings which stack back to back to give a disk-like structure with a central cavity, resembling the structure of eukaryotic proteasomes.

It localises to the cytoplasm. It carries out the reaction Hydrolysis of proteins to small peptides in the presence of ATP and magnesium. alpha-casein is the usual test substrate. In the absence of ATP, only oligopeptides shorter than five residues are hydrolyzed (such as succinyl-Leu-Tyr-|-NHMec, and Leu-Tyr-Leu-|-Tyr-Trp, in which cleavage of the -Tyr-|-Leu- and -Tyr-|-Trp bonds also occurs).. Functionally, cleaves peptides in various proteins in a process that requires ATP hydrolysis. Has a chymotrypsin-like activity. Plays a major role in the degradation of misfolded proteins. The chain is ATP-dependent Clp protease proteolytic subunit from Rickettsia canadensis (strain McKiel).